The following is a 352-amino-acid chain: NADH-ubiquinone oxidoreductase chain 2 (352 aa).

11 helical membrane passes run 4 to 24 (MISI…VSAE), 26 to 46 (WFVI…ILWF), 60 to 80 (FLVQ…QAWF), 96 to 116 (LCLS…FWLP), 124 to 144 (FIQG…LLFY), 150 to 170 (FSYF…WGGL), 178 to 198 (ILAF…AFSL), 205 to 225 (LFIY…LSIF), 241 to 261 (ITLV…TGFI), 274 to 294 (GFIF…FFYL), and 330 to 350 (LVSS…PLYI).

The protein belongs to the complex I subunit 2 family.

It localises to the mitochondrion inner membrane. It carries out the reaction a ubiquinone + NADH + 5 H(+)(in) = a ubiquinol + NAD(+) + 4 H(+)(out). Functionally, core subunit of the mitochondrial membrane respiratory chain NADH dehydrogenase (Complex I) that is believed to belong to the minimal assembly required for catalysis. Complex I functions in the transfer of electrons from NADH to the respiratory chain. The immediate electron acceptor for the enzyme is believed to be ubiquinone. The chain is NADH-ubiquinone oxidoreductase chain 2 (ND2) from Paracentrotus lividus (Common sea urchin).